A 311-amino-acid chain; its full sequence is Methionyl-tRNA formyltransferase (311 aa).

112–115 (SLLP) serves as a coordination point for (6S)-5,6,7,8-tetrahydrofolate.

This sequence belongs to the Fmt family.

The catalysed reaction is L-methionyl-tRNA(fMet) + (6R)-10-formyltetrahydrofolate = N-formyl-L-methionyl-tRNA(fMet) + (6S)-5,6,7,8-tetrahydrofolate + H(+). Functionally, attaches a formyl group to the free amino group of methionyl-tRNA(fMet). The formyl group appears to play a dual role in the initiator identity of N-formylmethionyl-tRNA by promoting its recognition by IF2 and preventing the misappropriation of this tRNA by the elongation apparatus. This Bradyrhizobium sp. (strain ORS 278) protein is Methionyl-tRNA formyltransferase.